The chain runs to 2115 residues: Non-reducing polyketide synthase ascC (2115 aa).

Positions 1 to 21 (MTLIQTKHSASAAVFSPQSTA) are disordered. Positions 14–260 (VFSPQSTAPK…HNSRNTELAQ (247 aa)) are N-terminal acylcarrier protein transacylase domain (SAT). Residues 381–805 (PDSIAIVGSA…GSNSALICSE (425 aa)) form the Ketosynthase family 3 (KS3) domain. Catalysis depends on for beta-ketoacyl synthase activity residues C553, H689, and H728. A malonyl-CoA:ACP transacylase (MAT) domain region spans residues 908-1210 (LTFSGQSRTT…ANPSAHTFQA (303 aa)). Catalysis depends on S995, which acts as the For acyl/malonyl transferase activity. The interval 1280 to 1406 (PKKVQQLVTL…GDFFATSGEM (127 aa)) is N-terminal hotdog fold. One can recognise a PKS/mFAS DH domain in the interval 1280–1581 (PKKVQQLVTL…FMRIKAAKLE (302 aa)). The product template (PT) domain stretch occupies residues 1285-1580 (QLVTLKKTEG…QFMRIKAAKL (296 aa)). The active-site Proton acceptor; for dehydratase activity is the H1315. A C-terminal hotdog fold region spans residues 1428–1581 (DAERLRTATA…FMRIKAAKLE (154 aa)). The active-site Proton donor; for dehydratase activity is D1492. The segment at 1587–1624 (ANPGSKTKSTNGNALPSVPRSVPAGPTSAPQQVAPTTM) is disordered. The segment covering 1588-1600 (NPGSKTKSTNGNA) has biased composition (polar residues). The Carrier domain occupies 1640 to 1724 (PSKIADLKSL…PTAALTEGLV (85 aa)). An O-(pantetheine 4'-phosphoryl)serine modification is found at S1674. Over residues 1734-1748 (SDSIRNSTGFHTTIP) the composition is skewed to polar residues. The tract at residues 1734–1767 (SDSIRNSTGFHTTIPATPAELHSNPPDSLDGSTV) is disordered. The segment at 1777-2107 (ARFKLDTMVY…YDFLLGELEN (331 aa)) is thioesterase (TE) domain. Residues S1897 and D2045 each act as for thioesterase activity in the active site.

It catalyses the reaction 3 malonyl-CoA + acetyl-CoA + 2 H(+) = orsellinate + 3 CO2 + 4 CoA. The protein operates within secondary metabolite biosynthesis; terpenoid biosynthesis. Functionally, non-reducing polyketide synthase; part of the asc-1 gene cluster that mediates the biosynthesis of both ascochlorin and ascofuranone, a strong inhibitor of cyanide-insensitive alternative oxidases and a promising drug candidate against African trypanosomiasis. The first step in the pathway is performed by the non-reducing polyketide synthase ascC that produces orsellinic acid by condensing acetyl-CoA with 3 malonyl-CoA units. Orsellinic acid is then prenylated by the prenyltransferase ascA to yield ilicicolinic acid B. Ilicicolinic acid B is further reduced to ilicicolin B by the reductase ascB. The halogenase ascD then chlorinates ilicicolin B to produce ilicicolin A which is converted to ilicicolin A epoxide by the cytochrome P450 monooxygenase ascE that catalyzes stereoselective epoxidation of the terminal double bond of the prenyl group. Ilicicolin A epoxide is the last common precursor for the biosynthesis of ascofuranone and ascochlorin. The terpene cyclase ascF produces a monocyclic terpene, and the cyclization reaction is proposed to be initiated by protonation of the terminal epoxide of ilicicolin A epoxide to generate a monocyclic tertiarycation, which is followed by a series of hydride and methyl shifts with abstraction of proton, leading to the formation of the (14S,15R,19R)-trimethylcyclohexanone ring structure of ilicicolin C, which is finally reduced to ascochlorin by the dehydrogenase ascG. On the other hand, ilicicolin A epoxide is hydroxylated by the cytochrome P450 monooxygenase ascH, and the resultant product is cyclized by the terpene cyclase ascI to ascofuranol via protonation-initiated epoxide ring opening, which facilitates the 6-endo-tet cyclization to form the tetrahy-drofuran ring. Finally, ascofuranol is oxidized into ascofuranone by ascJ. The chain is Non-reducing polyketide synthase ascC from Acremonium egyptiacum (Oospora egyptiaca).